Reading from the N-terminus, the 185-residue chain is DNA-directed RNA polymerase 21 kDa subunit (185 aa).

It belongs to the poxviridae DNA-directed RNA polymerase 22 kDa subunit family. The DNA-dependent RNA polymerase used for intermediate and late genes expression consists of eight subunits Rpo30/OPG66, Rpo7/OPG90, Rpo22/OPG103, Rpo147/OPG105, Rpo18/OPG119, Rpo19/OPG131, Rpo132/OPG151 and Rpo35/OPG156. The same holoenzyme, with the addition of the transcription-specificity factor OPG109, is used for early gene expression.

The protein localises to the virion. The enzyme catalyses RNA(n) + a ribonucleoside 5'-triphosphate = RNA(n+1) + diphosphate. Functionally, part of the DNA-dependent RNA polymerase which catalyzes the transcription of viral DNA into RNA using the four ribonucleoside triphosphates as substrates. Responsible for the transcription of early, intermediate and late genes. DNA-dependent RNA polymerase associates with the early transcription factor (ETF), itself composed of OPG118 and OPG133, thereby allowing the early genes transcription. Late transcription, and probably also intermediate transcription, require newly synthesized RNA polymerase. This chain is DNA-directed RNA polymerase 21 kDa subunit (OPG103), found in Oryctolagus cuniculus (Rabbit).